Reading from the N-terminus, the 715-residue chain is Fatty acid oxidation complex subunit alpha (715 aa).

Residues 1-190 form an enoyl-CoA hydratase region; that stretch reads MTTTSAFMLN…KAGLVDDVVP (190 aa). Residues 306 to 714 are 3-hydroxyacyl-CoA dehydrogenase; that stretch reads GPLNSVGILG…FWTNGETDQG (409 aa).

It in the N-terminal section; belongs to the enoyl-CoA hydratase/isomerase family. The protein in the central section; belongs to the 3-hydroxyacyl-CoA dehydrogenase family. Heterotetramer of two alpha chains (FadJ) and two beta chains (FadI).

It localises to the cytoplasm. The enzyme catalyses a (3S)-3-hydroxyacyl-CoA = a (2E)-enoyl-CoA + H2O. It carries out the reaction a 4-saturated-(3S)-3-hydroxyacyl-CoA = a (3E)-enoyl-CoA + H2O. It catalyses the reaction a (3S)-3-hydroxyacyl-CoA + NAD(+) = a 3-oxoacyl-CoA + NADH + H(+). The catalysed reaction is (3S)-3-hydroxybutanoyl-CoA = (3R)-3-hydroxybutanoyl-CoA. Its pathway is lipid metabolism; fatty acid beta-oxidation. Catalyzes the formation of a hydroxyacyl-CoA by addition of water on enoyl-CoA. Also exhibits 3-hydroxyacyl-CoA epimerase and 3-hydroxyacyl-CoA dehydrogenase activities. The sequence is that of Fatty acid oxidation complex subunit alpha from Salmonella typhimurium (strain LT2 / SGSC1412 / ATCC 700720).